The following is a 411-amino-acid chain: Lycopene beta cyclase (411 aa).

4-32 (ALVIGSGPAGLAIAAELAQRGLKVQGLSP) contacts NAD(+).

It belongs to the lycopene cyclase family. FAD is required as a cofactor.

The enzyme catalyses a carotenoid psi-end group = a carotenoid beta-end derivative. The catalysed reaction is all-trans-lycopene = gamma-carotene. It catalyses the reaction gamma-carotene = all-trans-beta-carotene. It carries out the reaction all-trans-neurosporene = beta-zeacarotene. It functions in the pathway carotenoid biosynthesis; beta-carotene biosynthesis. The protein operates within carotenoid biosynthesis; beta-zeacarotene biosynthesis. Inhibited by the bleaching herbicide 2-(4-methylphenoxy)triethylamine hydrochloride (MPTA). In terms of biological role, catalyzes the double cyclization reaction which converts lycopene to beta-carotene. It also converts neurosporene to the monocyclic beta-zeacarotene but does not cyclize zeta-carotene. The protein is Lycopene beta cyclase of Synechococcus elongatus (strain ATCC 33912 / PCC 7942 / FACHB-805) (Anacystis nidulans R2).